The sequence spans 588 residues: MARPIDVSQLIAGINKKKGLDENTSGKISKPRFLNKQERSKQERLKENEESLTPTQSDSAKVEIKKVNSRDDSFFNETNDKKRNPSKQNGSKFHFSWNESEDTLSGYDPIVSTRAIDLLWKGKTPKNAAESSYMGKHWTEKSLHEMNERDWRILKEDYAIVTKGGTVENPLRNWEELNIIPRDLLRVIIQELRFPSPTPIQRITIPNVCNMKQYRDFLGVASTGSGKTLAFVIPILIKMSRSPPRPPSLKIIDGPKALILAPTRELVQQIQKETQKVTKIWSKESNYDCKVISIVGGHSLEEISFSLSEGCDILVATPGRLIDSLENHLLVMKQVETLVLDEADKMIDLGFEDQVTNILTKVDINADSAVNRQTLMFTATMTPVIEKIAAGYMQKPVYATIGVETGSEPLIQQVVEYADNDEDKFKKLKPIVAKYDPPIIIFINYKQTADWLAEKFQKETNMKVTILHGSKSQEQREHSLQLFRTNKVQIMIATNVAARGLDIPNVSLVVNFQISKKMDDYIHRIGRTGRAANEGTAVSFVSAAEDESLIRELYKYVRKHDPLNSNIFSEAVKNKYNVGKQLSNEIIY.

The segment at 15-94 (NKKKGLDENT…PSKQNGSKFH (80 aa)) is disordered. Basic and acidic residues-rich tracts occupy residues 35–49 (NKQE…KENE) and 60–83 (AKVE…DKKR). At Ser69 the chain carries Phosphoserine. Positions 172–202 (RNWEELNIIPRDLLRVIIQELRFPSPTPIQR) match the Q motif motif. Residues 208–399 (VCNMKQYRDF…AGYMQKPVYA (192 aa)) enclose the Helicase ATP-binding domain. 221 to 228 (ASTGSGKT) is a binding site for ATP. The short motif at 341 to 344 (DEAD) is the DEAD box element. The 153-residue stretch at 427 to 579 (KLKPIVAKYD…EAVKNKYNVG (153 aa)) folds into the Helicase C-terminal domain.

It belongs to the DEAD box helicase family. DDX23/PRP28 subfamily. In terms of assembly, component of the U5 snRNP complex, composed of at least BRR2, PRP8, PRP28, DIB1, LIN1, SMB1, SMD1, SMD2, SMD3, SME1, SMX2, SMX3, and SNU114, associated with the U5 snRNA.

It localises to the cytoplasm. Its subcellular location is the nucleus. The catalysed reaction is ATP + H2O = ADP + phosphate + H(+). Functionally, ATP-dependent RNA helicase involved in mRNA splicing. May destabilize the U1/5'-splice site duplex to permit an effective competition for the 5'-splice site by the U6 snRNA, resulting in the switch between U1 and U6 at the 5'-splice site. May also act to unwind the U4/U6 base-pairing interaction in the U4/U6/U5 snRNP, facilitating the first covalent step of splicing. The sequence is that of Pre-mRNA-splicing ATP-dependent RNA helicase PRP28 (PRP28) from Saccharomyces cerevisiae (strain ATCC 204508 / S288c) (Baker's yeast).